The sequence spans 408 residues: Succinylornithine transaminase (408 aa).

Lysine 252 is subject to N6-(pyridoxal phosphate)lysine.

The protein belongs to the class-III pyridoxal-phosphate-dependent aminotransferase family. AstC subfamily. Pyridoxal 5'-phosphate serves as cofactor.

The enzyme catalyses N(2)-succinyl-L-ornithine + 2-oxoglutarate = N-succinyl-L-glutamate 5-semialdehyde + L-glutamate. It functions in the pathway amino-acid degradation; L-arginine degradation via AST pathway; L-glutamate and succinate from L-arginine: step 3/5. Its function is as follows. Catalyzes the transamination of N(2)-succinylornithine and alpha-ketoglutarate into N(2)-succinylglutamate semialdehyde and glutamate. Can also act as an acetylornithine aminotransferase. The polypeptide is Succinylornithine transaminase (Salmonella newport (strain SL254)).